Reading from the N-terminus, the 1563-residue chain is NACHT domain- and WD repeat-containing protein 1 (1563 aa).

The stretch at 274–314 (TNHQVLEQLRELELARQELGWLYQEIRHHLWQSTESTKVFC) is one WD 1 repeat. Positions 336–666 (TPLVLFGPPG…HRQLSQVIQV (331 aa)) constitute an NACHT domain. 342-349 (GPPGIGKT) is an ATP binding site. WD repeat units follow at residues 866–905 (GCHK…VVHV), 908–947 (GHTA…EKVT), 954–994 (QNPT…LVFC), 998–1037 (DVSD…LQEK), 1044–1082 (KEET…LLEK), 1126–1165 (EHED…TLLN), 1168–1207 (EGVG…KLQS), 1212–1251 (LDRT…EQDC), 1253–1292 (DTSN…DVLC), 1346–1385 (QLPE…FPLE), 1386–1425 (AHGS…GMFE), and 1431–1470 (SCCR…LLAV). The segment at 1534–1563 (AAEASQDAEPVAVEGKESKSNKRSQVCLIL) is disordered.

In terms of assembly, may interact with HSP90AA1, HSP90AB1 and BAG2.

The protein resides in the cytoplasm. It localises to the cytosol. In terms of biological role, may play a role in the control of androgen receptor (AR) protein steady-state levels. The chain is NACHT domain- and WD repeat-containing protein 1 (Nwd1) from Mus musculus (Mouse).